The following is a 160-amino-acid chain: MADIEDTHFETGDSGASATFPMQCSALRKNGFVMLKGRPCKIVEMSTSKTGKHGHAKVHLVGIDIFNGKKYEDICPSTHNMDVPHVKREDYQLTDISDDGYLTLMADNGDLREDLKIPDGDLGTQLRSDFDSGKELLCTVLKSCGEECVIAVKANTALDK.

Hypusine is present on Lys-52.

This sequence belongs to the eIF-5A family. Lys-52 undergoes hypusination, a unique post-translational modification that consists in the addition of a butylamino group from spermidine to lysine side chain, leading to the formation of the unusual amino acid hypusine. eIF-5As are the only known proteins to undergo this modification, which is essential for their function.

It localises to the cytoplasm. Functionally, translation factor that promotes translation elongation and termination, particularly upon ribosome stalling at specific amino acid sequence contexts. Binds between the exit (E) and peptidyl (P) site of the ribosome and promotes rescue of stalled ribosome: specifically required for efficient translation of polyproline-containing peptides as well as other motifs that stall the ribosome. Acts as a ribosome quality control (RQC) cofactor by joining the RQC complex to facilitate peptidyl transfer during CAT tailing step. The chain is Eukaryotic translation initiation factor 5A (eIF-5A) from Spodoptera exigua (Beet armyworm).